Reading from the N-terminus, the 230-residue chain is Cytidylate kinase (230 aa).

17-25 (GPTASGKGT) contacts ATP.

It belongs to the cytidylate kinase family. Type 1 subfamily.

It is found in the cytoplasm. The catalysed reaction is CMP + ATP = CDP + ADP. It catalyses the reaction dCMP + ATP = dCDP + ADP. This Ralstonia nicotianae (strain ATCC BAA-1114 / GMI1000) (Ralstonia solanacearum) protein is Cytidylate kinase.